A 75-amino-acid polypeptide reads, in one-letter code: ATP synthase subunit c (75 aa).

2 consecutive transmembrane segments (helical) span residues 8-28 (FIAI…IANI) and 52-72 (IGAA…MLLI).

Belongs to the ATPase C chain family. As to quaternary structure, F-type ATPases have 2 components, F(1) - the catalytic core - and F(0) - the membrane proton channel. F(1) has five subunits: alpha(3), beta(3), gamma(1), delta(1), epsilon(1). F(0) has three main subunits: a(1), b(2) and c(10-14). The alpha and beta chains form an alternating ring which encloses part of the gamma chain. F(1) is attached to F(0) by a central stalk formed by the gamma and epsilon chains, while a peripheral stalk is formed by the delta and b chains.

The protein resides in the cell membrane. Its function is as follows. F(1)F(0) ATP synthase produces ATP from ADP in the presence of a proton or sodium gradient. F-type ATPases consist of two structural domains, F(1) containing the extramembraneous catalytic core and F(0) containing the membrane proton channel, linked together by a central stalk and a peripheral stalk. During catalysis, ATP synthesis in the catalytic domain of F(1) is coupled via a rotary mechanism of the central stalk subunits to proton translocation. In terms of biological role, key component of the F(0) channel; it plays a direct role in translocation across the membrane. A homomeric c-ring of between 10-14 subunits forms the central stalk rotor element with the F(1) delta and epsilon subunits. The chain is ATP synthase subunit c from Wolbachia pipientis wMel.